A 427-amino-acid chain; its full sequence is Delta(14)-sterol reductase (427 aa).

Over 1–25 (MSEQESRDNAAVDAVRQKYGFGFSW) the chain is Cytoplasmic. A helical transmembrane segment spans residues 26–46 (LVLMIALPPLVYYLWICVTYY). The Periplasmic portion of the chain corresponds to 47 to 70 (QGELVFTSDAAAWRRFWSHVAPPT). Residues 71 to 91 (WHAAGLYAAWFLGQAALQVWA) form a helical membrane-spanning segment. The Cytoplasmic portion of the chain corresponds to 92–110 (PGPTVQGMKLPDGSRLDYR). The chain crosses the membrane as a helical span at residues 111 to 131 (MNGIFSFLFTLAVVFGLVTMG). The Periplasmic segment spans residues 132 to 141 (WLDATVLYDQ). A helical membrane pass occupies residues 142–162 (LGPLLTVVNIFTFVFAGFLYF). Residues 163 to 197 (WGLNGKQWERPTGRPFYDYFMGTALNPRIGSLDLK) are Cytoplasmic-facing. A helical membrane pass occupies residues 198 to 218 (LFCEARPGMIFWLLMNLSMAA). Residues 219 to 226 (KQYELHGT) lie on the Periplasmic side of the membrane. A helical membrane pass occupies residues 227–247 (VTVPMLLVVGFQSFYLIDYFI). Residues 248–262 (HEEAVLTTWDIKHEK) lie on the Cytoplasmic side of the membrane. A helical transmembrane segment spans residues 263-283 (FGWMLCWGDLVWLPFTYTLQA). The Periplasmic portion of the chain corresponds to 284–291 (QYLVHHTH). A helical membrane pass occupies residues 292–312 (DLPVWGIIAIVALNLAGYAIF). Residues 313–356 (RGANIQKHHFRRDPNRIVWGKPAKYIKTKQGSLLLTSGWWGIAR) lie on the Cytoplasmic side of the membrane. NADP(+) contacts are provided by residues K319, R323, L347, W352, and 359-360 (NY). A helical transmembrane segment spans residues 357-377 (HMNYFGDLMIALSWCLPAAFG). Residue S378 is a topological domain, periplasmic. A helical transmembrane segment spans residues 379-399 (PIPYFHIVYFTILLLHREKRD). Residues D399, 403–407 (CLAKY), and Y414 contribute to the NADP(+) site. Topologically, residues 400-427 (DAMCLAKYGEDWLQYRKKVPWRIVPKIY) are cytoplasmic.

Belongs to the ERG4/ERG24 family.

The protein localises to the cell inner membrane. It carries out the reaction 4,4-dimethyl-5alpha-cholesta-8,24-dien-3beta-ol + NADP(+) = 4,4-dimethyl-5alpha-cholesta-8,14,24-trien-3beta-ol + NADPH + H(+). It functions in the pathway steroid biosynthesis; zymosterol biosynthesis; zymosterol from lanosterol. Its function is as follows. Reduces the C14=C15 double bond of 4,4-dimethyl-cholesta-8,14,24-trienol to produce 4,4-dimethyl-cholesta-8,24-dienol. Complements the deletion of the Delta(14)-sterol reductase gene ERG24 in yeast. This is Delta(14)-sterol reductase from Methylotuvimicrobium alcaliphilum (strain DSM 19304 / NCIMB 14124 / VKM B-2133 / 20Z) (Methylomicrobium alcaliphilum).